The following is an 87-amino-acid chain: uncharacterized protein (87 aa).

This is an uncharacterized protein from Bacillus phage phi105 (Bacteriophage phi-105).